Here is a 95-residue protein sequence, read N- to C-terminus: Acylphosphatase (95 aa).

The region spanning 9 to 95 (RLTAWVHGRV…KGGLTGFVER (87 aa)) is the Acylphosphatase-like domain. Active-site residues include arginine 24 and asparagine 42.

It belongs to the acylphosphatase family.

The catalysed reaction is an acyl phosphate + H2O = a carboxylate + phosphate + H(+). This is Acylphosphatase (acyP) from Saccharopolyspora erythraea (strain ATCC 11635 / DSM 40517 / JCM 4748 / NBRC 13426 / NCIMB 8594 / NRRL 2338).